The following is a 925-amino-acid chain: Periplasmic nitrate reductase (925 aa).

Residues Met1 to Ala30 constitute a signal peptide (tat-type signal). Residues Trp36–Asp92 enclose the 4Fe-4S Mo/W bis-MGD-type domain. Residues Cys43, Cys46, Cys50, and Cys78 each coordinate [4Fe-4S] cluster. Mo-bis(molybdopterin guanine dinucleotide) is bound by residues Lys80, Gln148, Asn173, Cys177, Trp210–Met217, Met418, Gln422, Asn528, Ser553–Asp554, Lys576, Asp603, and Thr815–Ser824. Residue Trp891 participates in substrate binding. Mo-bis(molybdopterin guanine dinucleotide)-binding residues include Asn899 and Lys916.

This sequence belongs to the prokaryotic molybdopterin-containing oxidoreductase family. NasA/NapA/NarB subfamily. Component of the periplasmic nitrate reductase NapAB complex composed of NapA and NapB. [4Fe-4S] cluster serves as cofactor. It depends on Mo-bis(molybdopterin guanine dinucleotide) as a cofactor. Predicted to be exported by the Tat system. The position of the signal peptide cleavage has not been experimentally proven.

Its subcellular location is the periplasm. The enzyme catalyses 2 Fe(II)-[cytochrome] + nitrate + 2 H(+) = 2 Fe(III)-[cytochrome] + nitrite + H2O. In terms of biological role, catalytic subunit of the periplasmic nitrate reductase complex NapAB. Receives electrons from NapB and catalyzes the reduction of nitrate to nitrite. The sequence is that of Periplasmic nitrate reductase from Campylobacter fetus subsp. fetus (strain 82-40).